The chain runs to 376 residues: Methionine import ATP-binding protein MetN 2 (376 aa).

The interval 1-25 (MTATAQRQRPIDTTGAGQRAQQAEL) is disordered. Positions 34-273 (VRFINLGKTY…PQHEVSKTLL (240 aa)) constitute an ABC transporter domain. 70 to 77 (GRSGAGKS) serves as a coordination point for ATP.

Belongs to the ABC transporter superfamily. Methionine importer (TC 3.A.1.24) family. In terms of assembly, the complex is composed of two ATP-binding proteins (MetN), two transmembrane proteins (MetI) and a solute-binding protein (MetQ).

It is found in the cell inner membrane. The enzyme catalyses L-methionine(out) + ATP + H2O = L-methionine(in) + ADP + phosphate + H(+). It catalyses the reaction D-methionine(out) + ATP + H2O = D-methionine(in) + ADP + phosphate + H(+). Part of the ABC transporter complex MetNIQ involved in methionine import. Responsible for energy coupling to the transport system. This chain is Methionine import ATP-binding protein MetN 2, found in Pseudomonas syringae pv. syringae (strain B728a).